The sequence spans 284 residues: Pantothenate synthetase (284 aa).

30 to 37 provides a ligand contact to ATP; sequence MGYLHEGH. His-37 functions as the Proton donor in the catalytic mechanism. Gln-61 is a (R)-pantoate binding site. Gln-61 contributes to the beta-alanine binding site. 147 to 150 contacts ATP; sequence GQKD. Position 153 (Gln-153) interacts with (R)-pantoate. ATP-binding positions include Val-176 and 184 to 187; that span reads KSSR.

It belongs to the pantothenate synthetase family. Homodimer.

The protein localises to the cytoplasm. It catalyses the reaction (R)-pantoate + beta-alanine + ATP = (R)-pantothenate + AMP + diphosphate + H(+). Its pathway is cofactor biosynthesis; (R)-pantothenate biosynthesis; (R)-pantothenate from (R)-pantoate and beta-alanine: step 1/1. In terms of biological role, catalyzes the condensation of pantoate with beta-alanine in an ATP-dependent reaction via a pantoyl-adenylate intermediate. The sequence is that of Pantothenate synthetase from Lysinibacillus sphaericus (strain C3-41).